Here is a 133-residue protein sequence, read N- to C-terminus: Ribosome-binding factor A (133 aa).

The protein belongs to the RbfA family. As to quaternary structure, monomer. Binds 30S ribosomal subunits, but not 50S ribosomal subunits or 70S ribosomes.

The protein resides in the cytoplasm. In terms of biological role, one of several proteins that assist in the late maturation steps of the functional core of the 30S ribosomal subunit. Associates with free 30S ribosomal subunits (but not with 30S subunits that are part of 70S ribosomes or polysomes). Required for efficient processing of 16S rRNA. May interact with the 5'-terminal helix region of 16S rRNA. In Salmonella typhi, this protein is Ribosome-binding factor A.